The primary structure comprises 461 residues: Fumarate hydratase class II (461 aa).

Residues 97-99 (SGT), 127-130 (HPND), 137-139 (SSN), and threonine 185 contribute to the substrate site. The active-site Proton donor/acceptor is the histidine 186. Serine 316 is an active-site residue. Substrate-binding positions include serine 317 and 322-324 (KVN).

The protein belongs to the class-II fumarase/aspartase family. Fumarase subfamily. As to quaternary structure, homotetramer.

The protein localises to the cytoplasm. The catalysed reaction is (S)-malate = fumarate + H2O. The protein operates within carbohydrate metabolism; tricarboxylic acid cycle; (S)-malate from fumarate: step 1/1. Involved in the TCA cycle. Catalyzes the stereospecific interconversion of fumarate to L-malate. This Staphylococcus aureus (strain MSSA476) protein is Fumarate hydratase class II.